A 253-amino-acid chain; its full sequence is Putative B3 domain-containing protein Os03g0619850 (253 aa).

Residues 26 to 119 constitute a DNA-binding region (TF-B3); the sequence is MSCFLIRMTT…CFEVMILDSD (94 aa). Disordered stretches follow at residues 126–150 and 230–253; these read LKSNRNGVSDESQESEDSEGPAGPP and HRDADQERQMHHQAVPDQWLEQDS. Residues 230–239 are compositionally biased toward basic and acidic residues; it reads HRDADQERQM.

It localises to the nucleus. This is Putative B3 domain-containing protein Os03g0619850 from Oryza sativa subsp. japonica (Rice).